A 77-amino-acid polypeptide reads, in one-letter code: Metallothionein-like protein 2 (77 aa).

Belongs to the metallothionein superfamily. Type 15 family.

Its function is as follows. Metallothioneins have a high content of cysteine residues that bind various heavy metals. The polypeptide is Metallothionein-like protein 2 (MT1A) (Trifolium repens (Creeping white clover)).